Consider the following 553-residue polypeptide: Dihydroxy-acid dehydratase (553 aa).

D78 is a binding site for Mg(2+). [2Fe-2S] cluster is bound at residue C119. Positions 120 and 121 each coordinate Mg(2+). K121 is modified (N6-carboxylysine). C193 contacts [2Fe-2S] cluster. Residue E441 coordinates Mg(2+). S467 serves as the catalytic Proton acceptor.

The protein belongs to the IlvD/Edd family. Homodimer. Requires [2Fe-2S] cluster as cofactor. Mg(2+) is required as a cofactor.

The catalysed reaction is (2R)-2,3-dihydroxy-3-methylbutanoate = 3-methyl-2-oxobutanoate + H2O. It carries out the reaction (2R,3R)-2,3-dihydroxy-3-methylpentanoate = (S)-3-methyl-2-oxopentanoate + H2O. It functions in the pathway amino-acid biosynthesis; L-isoleucine biosynthesis; L-isoleucine from 2-oxobutanoate: step 3/4. It participates in amino-acid biosynthesis; L-valine biosynthesis; L-valine from pyruvate: step 3/4. In terms of biological role, functions in the biosynthesis of branched-chain amino acids. Catalyzes the dehydration of (2R,3R)-2,3-dihydroxy-3-methylpentanoate (2,3-dihydroxy-3-methylvalerate) into 2-oxo-3-methylpentanoate (2-oxo-3-methylvalerate) and of (2R)-2,3-dihydroxy-3-methylbutanoate (2,3-dihydroxyisovalerate) into 2-oxo-3-methylbutanoate (2-oxoisovalerate), the penultimate precursor to L-isoleucine and L-valine, respectively. The polypeptide is Dihydroxy-acid dehydratase (Citrifermentans bemidjiense (strain ATCC BAA-1014 / DSM 16622 / JCM 12645 / Bem) (Geobacter bemidjiensis)).